A 694-amino-acid chain; its full sequence is Phosphatase and actin regulator 4 (694 aa).

2 disordered regions span residues 1–354 (MEDP…SPLV) and 375–405 (QDIS…PSRL). The segment covering 45 to 54 (KPWKWRKKKS) has biased composition (basic residues). The segment covering 55–84 (SDKFKETSEVLERKISMRKPREELVKRGVL) has biased composition (basic and acidic residues). The RPEL 1 repeat unit spans residues 63-88 (EVLERKISMRKPREELVKRGVLLEDP). Residues serine 116, serine 118, serine 129, and serine 145 each carry the phosphoserine modification. 2 stretches are compositionally biased toward low complexity: residues 184–209 (AGST…TAAT) and 231–249 (TLPA…TAPA). The segment covering 250 to 259 (KQPPIPPPKP) has biased composition (pro residues). 4 positions are modified to phosphoserine: serine 264, serine 285, serine 335, and serine 337. Residues 329-352 (LIIPPSSPSPPLPTHIPPEPPRSP) show a composition bias toward pro residues. Positions 381–392 (EDQKTEVPKKIQ) are enriched in basic and acidic residues. A Phosphoserine modification is found at serine 420. Threonine 425 carries the phosphothreonine modification. Phosphoserine occurs at positions 436, 446, 457, 503, 505, 549, and 582. Residues 467–562 (VPDDEEEEQT…TNLNSWPRKS (96 aa)) form a disordered region. A compositionally biased stretch (polar residues) spans 546–559 (SRPSEPETNLNSWP). 2 RPEL repeats span residues 575-600 (NTLI…QPKN) and 613-638 (RRLT…RFNE). The tract at residues 589 to 608 (ELEQRNILQPKNEADRQAEK) is disordered. Serine 620 is modified (phosphoserine).

This sequence belongs to the phosphatase and actin regulator family. In terms of assembly, binds PPP1CA and actin.

Its subcellular location is the cytoplasm. The protein resides in the cell projection. It localises to the lamellipodium. In terms of biological role, regulator of protein phosphatase 1 (PP1) required for neural tube and optic fissure closure, and enteric neural crest cell (ENCCs) migration during development. Acts as an activator of PP1 by interacting with PPP1CA and preventing phosphorylation of PPP1CA at 'Thr-320'. During neural tube closure, localizes to the ventral neural tube and activates PP1, leading to down-regulate cell proliferation within cranial neural tissue and the neural retina. Also acts as a regulator of migration of enteric neural crest cells (ENCCs) by activating PP1, leading to dephosphorylation and subsequent activation of cofilin (COF1 or COF2) and repression of the integrin signaling through the RHO/ROCK pathway. The sequence is that of Phosphatase and actin regulator 4 (Phactr4) from Mus musculus (Mouse).